The chain runs to 321 residues: tRNA-dihydrouridine synthase B (321 aa).

FMN-binding positions include 16–18 (PMA) and glutamine 70. The Proton donor role is filled by cysteine 100. Residues lysine 139, 200–202 (NGD), and 224–225 (GR) each bind FMN.

Belongs to the Dus family. DusB subfamily. The cofactor is FMN.

The enzyme catalyses a 5,6-dihydrouridine in tRNA + NAD(+) = a uridine in tRNA + NADH + H(+). It catalyses the reaction a 5,6-dihydrouridine in tRNA + NADP(+) = a uridine in tRNA + NADPH + H(+). Its function is as follows. Catalyzes the synthesis of 5,6-dihydrouridine (D), a modified base found in the D-loop of most tRNAs, via the reduction of the C5-C6 double bond in target uridines. The polypeptide is tRNA-dihydrouridine synthase B (Yersinia pestis).